The following is a 691-amino-acid chain: MSAPARPAPAAPIRVAAGTTAGQAVRDAGLPSRGAPDAVVVVQDPDGRLRDLSWVPDADVDVIPVTADTEDGRSVIRHSAAHVLAQAVQALFPDAKLGIGPPITDGFYYDFEVAEPFTPEDLEALEKRMRQIVKDGQLFSRRVFESKDEAREELANEPYKLELIDDKSGDLESSDEIMEIGGDELTAYDNLNPRTRERVWGDLCRGPHIPTTRYIPAFKLTRSSAAYWRGDQNNASLQRIYGTAWESQEALDRHLELIEEAQKRDHRKLGVELDLFSFPDELGSGLPVFHPKGGVVRRELEEYSRRKHIEAGYEFVNTPHITKEHLYITSGHLEWYADGMFPAMHIDAEYNDDGTVRKPGQDYYLKPMNCPMHHLIYRSRGRSYRELPLRLFEFGSVYRYEKSGVVHGLTRVRGMTQDDAHIYCTREEMRDELARLLQFVLDLLADYGLDDFYLELSTKDPDKFVGSDDMWEEATETLREVAESSGLHLVPDPGGAAFYGPKISVQVRDALGRNWQMSTIQLDFNMPDRFELEYTAADGTRKRPVLIHRALFGSIERFFGVLTEHYAGAFPAWLAPVQVVGIPVADDHIRYLDGLVAQLRALGIRAEVDTSDDRMAKKIVNHTNQKVPFMLLAGDRDVEAEAVSFRFGDRTQVNGVPREQAVAAIVDWVTRRENATPTAELVEISAETGEG.

The region spanning 1–66 (MSAPARPAPA…DADVDVIPVT (66 aa)) is the TGS domain. The interval 265–571 (DHRKLGVELD…LTEHYAGAFP (307 aa)) is catalytic. Cys-370, His-421, and His-548 together coordinate Zn(2+).

Belongs to the class-II aminoacyl-tRNA synthetase family. In terms of assembly, homodimer. The cofactor is Zn(2+).

The protein localises to the cytoplasm. It carries out the reaction tRNA(Thr) + L-threonine + ATP = L-threonyl-tRNA(Thr) + AMP + diphosphate + H(+). Its function is as follows. Catalyzes the attachment of threonine to tRNA(Thr) in a two-step reaction: L-threonine is first activated by ATP to form Thr-AMP and then transferred to the acceptor end of tRNA(Thr). Also edits incorrectly charged L-seryl-tRNA(Thr). The chain is Threonine--tRNA ligase from Mycolicibacterium vanbaalenii (strain DSM 7251 / JCM 13017 / BCRC 16820 / KCTC 9966 / NRRL B-24157 / PYR-1) (Mycobacterium vanbaalenii).